We begin with the raw amino-acid sequence, 199 residues long: Pneumococcal vaccine antigen A homolog (199 aa).

The protein resides in the cell surface. The polypeptide is Pneumococcal vaccine antigen A homolog (pvaA) (Streptococcus pyogenes serotype M6 (strain ATCC BAA-946 / MGAS10394)).